Consider the following 100-residue polypeptide: MTPWFLYLIRTADNKLYTGITTDVERRYQQHQSGKGAKALRGKGELTLAFSAPVGDRSLALRAEYRVKQLTKRQKERLVAEGAVFAELLSSLQTPEIKSD.

Residues 2–77 form the GIY-YIG domain; sequence TPWFLYLIRT…KQLTKRQKER (76 aa).

This sequence belongs to the UPF0213 family.

This Escherichia coli O1:K1 / APEC protein is UPF0213 protein YhbQ.